A 506-amino-acid polypeptide reads, in one-letter code: Maturase K (506 aa).

The protein belongs to the intron maturase 2 family. MatK subfamily.

It is found in the plastid. The protein localises to the chloroplast. Usually encoded in the trnK tRNA gene intron. Probably assists in splicing its own and other chloroplast group II introns. In Arabis alpina (Alpine rock-cress), this protein is Maturase K.